The chain runs to 306 residues: Phospho-N-acetylmuramoyl-pentapeptide-transferase (306 aa).

10 helical membrane-spanning segments follow: residues 2–22 (IALLSINFVAFFVFLLILKYW), 47–67 (SGTPVMGGIVFILAVFPFLFF), 71–91 (FFISLSTILFGLLGLVDDLKL), 105–125 (IFLSFIITLILYVFSPHDYKI), 131–151 (LIIDSSILYIFLFFIILIAVP), 162–182 (GLAGGTSLVTLIFLLVYSFHF), 185–205 (IALEISLMITALLAFLWFNSH), 209–229 (IFMGDVGAFALGGFIASLSVV), 236–256 (LIFLSGIFLIESLSVFIQVFF), and 284–304 (IVWRFYIIHLLIIIGGLVLWY).

Belongs to the glycosyltransferase 4 family. MraY subfamily. Mg(2+) serves as cofactor.

The protein localises to the cell inner membrane. The enzyme catalyses UDP-N-acetyl-alpha-D-muramoyl-L-alanyl-gamma-D-glutamyl-meso-2,6-diaminopimeloyl-D-alanyl-D-alanine + di-trans,octa-cis-undecaprenyl phosphate = di-trans,octa-cis-undecaprenyl diphospho-N-acetyl-alpha-D-muramoyl-L-alanyl-D-glutamyl-meso-2,6-diaminopimeloyl-D-alanyl-D-alanine + UMP. Its pathway is cell wall biogenesis; peptidoglycan biosynthesis. Its function is as follows. Catalyzes the initial step of the lipid cycle reactions in the biosynthesis of the cell wall peptidoglycan: transfers peptidoglycan precursor phospho-MurNAc-pentapeptide from UDP-MurNAc-pentapeptide onto the lipid carrier undecaprenyl phosphate, yielding undecaprenyl-pyrophosphoryl-MurNAc-pentapeptide, known as lipid I. In Dictyoglomus thermophilum (strain ATCC 35947 / DSM 3960 / H-6-12), this protein is Phospho-N-acetylmuramoyl-pentapeptide-transferase.